We begin with the raw amino-acid sequence, 726 residues long: ORC ubiquitin ligase 1 (726 aa).

The RING-type; degenerate zinc finger occupies 18–56 (CHICLGKVRQPVICINNHVFCSICIDLWLKNNSQCPACR). Coiled-coil stretches lie at residues 87 to 129 (LRKT…TILD) and 155 to 270 (ETVA…MNSI). Position 210 is a phosphoserine (Ser210). Disordered stretches follow at residues 276 to 334 (SADG…TSKA) and 436 to 460 (NVSN…ECFS). A compositionally biased stretch (basic and acidic residues) spans 280–290 (KGSKGSEEDVV). The segment covering 304–318 (SSTSSSSHLAKPSSS) has biased composition (low complexity). The span at 319–334 (RLCDTSSARQESTSKA) shows a compositional bias: polar residues. Basic and acidic residues predominate over residues 446–457 (DISRSENEKKSE). Phosphoserine occurs at positions 526, 553, 561, 568, and 570. Disordered regions lie at residues 570 to 602 (SSQG…DQLE) and 687 to 726 (QSPW…ATKS). Over residues 579 to 588 (EPDKLEEKTE) the composition is skewed to basic and acidic residues. The span at 589 to 602 (LNLSKGSLTNDQLE) shows a compositional bias: polar residues. Over residues 713–726 (SSLSSASPSKATKS) the composition is skewed to low complexity. A phosphoserine mark is found at Ser719 and Ser721.

In terms of assembly, associates with ORC complex. Binds to chromatin; association is cell cycle-regulated, absent from mitotic chromosomes, is associated with chromatin from G1 and partially released from chromatin from mid S-phase. Post-translationally, auto-ubiquitinated.

The protein resides in the chromosome. The enzyme catalyses S-ubiquitinyl-[E2 ubiquitin-conjugating enzyme]-L-cysteine + [acceptor protein]-L-lysine = [E2 ubiquitin-conjugating enzyme]-L-cysteine + N(6)-ubiquitinyl-[acceptor protein]-L-lysine.. E3 ubiquitin ligase essential for DNA replication origin activation during S phase. Acts as a replication origin selector which selects the origins to be fired and catalyzes the multi-mono-ubiquitination of a subset of chromatin-bound ORC3 and ORC5 during S-phase. The polypeptide is ORC ubiquitin ligase 1 (Homo sapiens (Human)).